The sequence spans 94 residues: HssA/B-like protein 51 (94 aa).

The disordered stretch occupies residues 1 to 25; the sequence is MTLFSSISSISNPMTNSKSRISSFG.

It belongs to the hssA/B family.

This Dictyostelium discoideum (Social amoeba) protein is HssA/B-like protein 51 (hssl51).